The sequence spans 159 residues: uncharacterized protein (159 aa).

This is an uncharacterized protein from Acanthamoeba polyphaga (Amoeba).